We begin with the raw amino-acid sequence, 601 residues long: Leucine zipper putative tumor suppressor 1 (601 aa).

Gly2 carries the N-myristoyl glycine lipid modification. Residues 135 to 190 (GAILHSSPESTNHQLHPMPPDKPKEQELKPGLCSGALSDSGRNSMSSLPTHSTTSS) are disordered. A compositionally biased stretch (basic and acidic residues) spans 153–162 (PPDKPKEQEL). Polar residues predominate over residues 174–190 (SGRNSMSSLPTHSTTSS). The stretch at 255–573 (PLSTDECTIQ…RLEKALQQLA (319 aa)) forms a coiled coil.

The protein belongs to the LZTS family. As to quaternary structure, binds EEF1G, TLK2 and CDK1. In terms of processing, phosphorylated on serine residues. Hyperphosphorylated by the cAMP-dependent kinase PKA during cell-cycle progression. In terms of tissue distribution, highly expressed in brain, in particular in cortex, the CA2 region of the hippocampus, olfactory bulb, striatum and pons. Not detectable in the other tissues tested.

Its subcellular location is the cytoplasm. It is found in the cell membrane. The protein localises to the cell projection. It localises to the dendritic spine. The protein resides in the postsynaptic density. Its subcellular location is the synapse. Involved in the regulation of cell growth. May stabilize the active CDC2-cyclin B1 complex and thereby contribute to the regulation of the cell cycle and the prevention of uncontrolled cell proliferation. May act as tumor suppressor. In Rattus norvegicus (Rat), this protein is Leucine zipper putative tumor suppressor 1 (Lzts1).